A 109-amino-acid chain; its full sequence is MAFASVLKDAEVTAALDGCKAAGSFDHKKFFKACGLSGKSTDEVKKAFAIIDQDKSGFIEEEELKLFLQNFKAGARALSDAETKAFLKAGDSDGDGKIGIDEFAAMIKG.

N-acetylalanine is present on Ala2. The tract at residues 22–41 (AGSFDHKKFFKACGLSGKST) is igE-binding. 2 consecutive EF-hand domains span residues 39–74 (KSTD…FKAG) and 78–109 (LSDA…MIKG). Residues Asp52, Asp54, Ser56, Phe58, Glu60, Glu63, Asp91, Asp93, Asp95, Lys97, and Glu102 each contribute to the Ca(2+) site.

Belongs to the parvalbumin family. Post-translationally, the N-terminus is blocked. As to expression, expressed in both white and dark muscles (at protein level). About eight and a half times lower expression in the dark muscle than in the white muscle (at protein level).

In muscle, parvalbumin is thought to be involved in relaxation after contraction. It binds two calcium ions. This chain is Parvalbumin beta, found in Scomber japonicus (Chub mackerel).